Consider the following 44-residue polypeptide: Omega-plectoxin-Pt1a (44 aa).

5 disulfide bridges follow: C3-C17, C10-C23, C16-C35, C20-C42, and C25-C33. Residue T44 is modified to Threonine amide. A lipid anchor (O-palmitoyl threonine) is attached at T44.

The protein belongs to the neurotoxin 02 (plectoxin) family. 02 (plectoxin) subfamily. In terms of processing, contains 5 disulfide bonds. Acylation by palmitate is required for biological activity. As to expression, expressed by the venom gland.

It localises to the secreted. Functionally, toxin that inhibits presynaptic voltage-gated calcium channel (Cav) in Drosophila nerve terminals, most likely through specific block of the Cav2 channel (known as Dmca1A). In Plectreurys tristis (Spider), this protein is Omega-plectoxin-Pt1a.